Reading from the N-terminus, the 531-residue chain is Serine protease gd (531 aa).

The N-terminal stretch at 1 to 19 (MRLHLAAILILCIEHVTKA) is a signal peptide. The interval 155-174 (PEEEEVRKTDDKPPSTPHIQ) is disordered. The Peptidase S1 domain maps to 246 to 531 (IESDSADSLP…FLDWITAFVI (286 aa)). An N-linked (GlcNAc...) asparagine glycan is attached at asparagine 272. Cysteine 280 and cysteine 296 are disulfide-bonded. Residues histidine 295 and aspartate 350 each act as charge relay system in the active site. N-linked (GlcNAc...) asparagine glycans are attached at residues asparagine 397 and asparagine 445. An intrachain disulfide couples cysteine 432 to cysteine 449. The active-site Charge relay system is the serine 471.

This sequence belongs to the peptidase S1 family. In terms of processing, proteolytically activated by the protease ndl. In terms of tissue distribution, expression begins in previtellogenic stages and is seen in germline-derived nurse cells of the germarium. Expression continues throughout oogenesis with transcripts from the nurse cells accumulating in the oocytes. Most abundant in the ovaries, the level of protein decreases from the moment of egg laying and is essentially gone by 4 hours.

Its subcellular location is the secreted. Component of the extracellular signaling pathway that establishes the dorsal-ventral pathway of the embryo. A protease cascade involving ndl, gd, snk and ea results in activation of the spz Toll receptor ligand; acts downstream of ndl but upstream of snk and ea. Activation of ea requires activation of the ndl-gd-snk protease cascade and sulfation of a vitelline membrane component by pip. Localized activation of the Toll receptor in the ventral region of the embryo defines cell identities along the dorsal-ventral continuum. This chain is Serine protease gd, found in Drosophila melanogaster (Fruit fly).